A 342-amino-acid chain; its full sequence is Methylthioribose-1-phosphate isomerase (342 aa).

Substrate contacts are provided by residues 49–51 (RGA), Arg-86, and Gln-187. The active-site Proton donor is Asp-228. A substrate-binding site is contributed by 238-239 (NK).

The protein belongs to the eIF-2B alpha/beta/delta subunits family. MtnA subfamily.

The catalysed reaction is 5-(methylsulfanyl)-alpha-D-ribose 1-phosphate = 5-(methylsulfanyl)-D-ribulose 1-phosphate. It functions in the pathway amino-acid biosynthesis; L-methionine biosynthesis via salvage pathway; L-methionine from S-methyl-5-thio-alpha-D-ribose 1-phosphate: step 1/6. Functionally, catalyzes the interconversion of methylthioribose-1-phosphate (MTR-1-P) into methylthioribulose-1-phosphate (MTRu-1-P). The sequence is that of Methylthioribose-1-phosphate isomerase from Citrobacter koseri (strain ATCC BAA-895 / CDC 4225-83 / SGSC4696).